Consider the following 147-residue polypeptide: Myoglobin (147 aa).

The Globin domain maps to 2–141; sequence ADFDMVLKCW…IIADMEADYK (140 aa). Residue histidine 60 coordinates nitrite. Histidine 60 lines the O2 pocket. Heme b is bound at residue histidine 89.

Belongs to the globin family. In terms of assembly, monomeric.

It localises to the cytoplasm. Its subcellular location is the sarcoplasm. It carries out the reaction Fe(III)-heme b-[protein] + nitric oxide + H2O = Fe(II)-heme b-[protein] + nitrite + 2 H(+). The catalysed reaction is H2O2 + AH2 = A + 2 H2O. Monomeric heme protein which primary function is to store oxygen and facilitate its diffusion within muscle tissues. Reversibly binds oxygen through a pentacoordinated heme iron and enables its timely and efficient release as needed during periods of heightened demand. Depending on the oxidative conditions of tissues and cells, and in addition to its ability to bind oxygen, it also has a nitrite reductase activity whereby it regulates the production of bioactive nitric oxide. Under stress conditions, like hypoxia and anoxia, it also protects cells against reactive oxygen species thanks to its pseudoperoxidase activity. The protein is Myoglobin (mb) of Gobionotothen gibberifrons (Humped rockcod).